We begin with the raw amino-acid sequence, 220 residues long: 7-cyano-7-deazaguanine synthase (220 aa).

7 to 17 serves as a coordination point for ATP; it reads LSGGMDSSTLA. Zn(2+) contacts are provided by cysteine 187, cysteine 195, cysteine 198, and cysteine 201.

This sequence belongs to the QueC family. Zn(2+) is required as a cofactor.

The enzyme catalyses 7-carboxy-7-deazaguanine + NH4(+) + ATP = 7-cyano-7-deazaguanine + ADP + phosphate + H2O + H(+). Its pathway is purine metabolism; 7-cyano-7-deazaguanine biosynthesis. Catalyzes the ATP-dependent conversion of 7-carboxy-7-deazaguanine (CDG) to 7-cyano-7-deazaguanine (preQ(0)). This Methanospirillum hungatei JF-1 (strain ATCC 27890 / DSM 864 / NBRC 100397 / JF-1) protein is 7-cyano-7-deazaguanine synthase.